Consider the following 627-residue polypeptide: E3 ubiquitin-protein ligase DTX1 (627 aa).

WWE domains follow at residues 14 to 94 and 95 to 171; these read GLGF…PVRR and NFYD…RLRR. 3 disordered regions span residues 222–254, 269–327, and 368–398; these read QRRK…ALVV, PATG…ALPV, and PPVS…KSKN. Pro residues-rich tracts occupy residues 230-248 and 275-287; these read PAAP…PGGP and EPAP…PRSP. The SH3-binding motif lies at 240 to 243; sequence PPPL. Residues 296–314 show a composition bias toward polar residues; that stretch reads PGQNNLSRPGPQRSTSVSA. A compositionally biased stretch (basic residues) spans 386 to 396; that stretch reads RKTKKKHLKKS. The segment at 418-479 adopts an RING-type zinc-finger fold; the sequence is CTICMERLVT…DGSLQCPTCK (62 aa).

It belongs to the Deltex family. As to quaternary structure, homodimer. May form a heterodimer with other members of the Deltex family. Interacts with NOTCH1 via its N-terminal region and EIF3F, the interaction is required for NOTCH1 deubiquitination. Interacts with EP300. Forms a heterodimer with BBAP; the heterodimerization leading to an increase of in vitro ubiquitin ligase activity. Interacts with ITCH. Ubiquitinated; undergoes 'Lys-29'-linked polyubiquitination catalyzed by ITCH. As to expression, predominantly expressed in the brain and testis. Weakly expressed in the thymus, spleen and ovary. Predominantly expressed in regions containing post-mitotic differentiating neurons.

It localises to the cytoplasm. The protein resides in the nucleus. The enzyme catalyses S-ubiquitinyl-[E2 ubiquitin-conjugating enzyme]-L-cysteine + [acceptor protein]-L-lysine = [E2 ubiquitin-conjugating enzyme]-L-cysteine + N(6)-ubiquitinyl-[acceptor protein]-L-lysine.. Its pathway is protein modification; protein ubiquitination. Its function is as follows. Regulator of Notch signaling, a signaling pathway involved in cell-cell communications that regulates a broad spectrum of cell-fate determinations. Mainly acts as a positive regulator of Notch, but it also acts as a negative regulator, depending on the developmental and cell context. Mediates the antineural activity of Notch, possibly by inhibiting the transcriptional activation mediated by MATCH1. Involved in neurogenesis, lymphogenesis and myogenesis, and may also be involved in MZB (Marginal zone B) cell differentiation. Promotes B-cell development at the expense of T-cell development, suggesting that it can antagonize NOTCH1. Functions as an ubiquitin ligase protein in vivo, mediating ubiquitination and promoting degradation of MEKK1, suggesting that it may regulate the Notch pathway via some ubiquitin ligase activity. The chain is E3 ubiquitin-protein ligase DTX1 (Dtx1) from Mus musculus (Mouse).